The following is a 220-amino-acid chain: Superoxide dismutase [Fe] (220 aa).

Histidine 26, histidine 73, aspartate 164, and histidine 168 together coordinate Fe cation.

This sequence belongs to the iron/manganese superoxide dismutase family. Homodimer. Requires Fe cation as cofactor.

It carries out the reaction 2 superoxide + 2 H(+) = H2O2 + O2. Functionally, destroys superoxide anion radicals which are normally produced within the cells and which are toxic to biological systems. This Campylobacter jejuni subsp. jejuni serotype O:2 (strain ATCC 700819 / NCTC 11168) protein is Superoxide dismutase [Fe] (sodB).